A 215-amino-acid polypeptide reads, in one-letter code: CASP-like protein 1E1 (215 aa).

Residues 1 to 51 (MESSRGKPGLNGSGGGAAAFDYSSRRGYYTGAGAALPPLAAGSRAPPVDPC) are Cytoplasmic-facing. The helical transmembrane segment at 52–72 (CVVLRVFVLLGTLASAVVMAA) threads the bilayer. The Extracellular segment spans residues 73 to 103 (DRQSTTVQIAAGEELAPPLRVPVTAKWTYSS). Residues 104–124 (AFVYFVVANAMVFAFSAAALA) form a helical membrane-spanning segment. At 125-130 (AVRRRS) the chain is on the cytoplasmic side. A helical transmembrane segment spans residues 131–151 (AVVPVMVGDLVAMALLFSAVG). The Extracellular segment spans residues 152-185 (AAAQFGLLGERGNAHVRWAKVCDVYGPFCERAMA). A helical transmembrane segment spans residues 186–206 (AVVVALIAAFADLVLLMLTIL). Topologically, residues 207–215 (TIHKASSYY) are cytoplasmic.

The protein belongs to the Casparian strip membrane proteins (CASP) family. As to quaternary structure, homodimer and heterodimers.

It localises to the cell membrane. This chain is CASP-like protein 1E1, found in Oryza sativa subsp. japonica (Rice).